We begin with the raw amino-acid sequence, 252 residues long: Aquaporin TIP4-4 (252 aa).

Helical transmembrane passes span 20-40 and 53-73; these read AVLA…GSAM and VVGL…MVSA. The NPA 1 signature appears at 83–85; that stretch reads NPA. A run of 3 helical transmembrane segments spans residues 105–125, 143–163, and 168–188; these read VAAQ…LAVA, GVLM…ATVV, and AVGG…VLAG. The short motif at 197–199 is the NPA 2 element; it reads NPA. Residues 216–236 form a helical membrane-spanning segment; the sequence is VYWVGPLIGGPLAGLVYDGLF.

It belongs to the MIP/aquaporin (TC 1.A.8) family. TIP (TC 1.A.8.10) subfamily.

The protein localises to the vacuole membrane. Its function is as follows. Aquaporins facilitate the transport of water and small neutral solutes across cell membranes. In Zea mays (Maize), this protein is Aquaporin TIP4-4 (TIP4-4).